Consider the following 417-residue polypeptide: Secernin-3 (417 aa).

Positions 1–5 are excised as a propeptide; the sequence is MYPRS. Residue cysteine 6 is part of the active site. Glyoxylic acid (Cys); alternate is present on cysteine 6. Pyruvic acid (Cys); alternate is present on cysteine 6.

Belongs to the peptidase C69 family. Secernin subfamily.

Functionally, plays a role in thermal nociception. This Danio rerio (Zebrafish) protein is Secernin-3 (scrn3).